The following is a 131-amino-acid chain: uncharacterized protein (131 aa).

The region spanning 1–116 is the CMP/dCMP-type deaminase domain; that stretch reads MYMARMLSEM…EMLEASSIQC (116 aa).

This is an uncharacterized protein from Caenorhabditis elegans.